A 218-amino-acid polypeptide reads, in one-letter code: Tubulin polymerization-promoting protein (218 aa).

The interval 1–46 (MADSKAKPAKAANKTPPKSPGDPARAAKRLSLESEGANEGATAAPE) is disordered. The interval 1–115 (MADSKAKPAK…SCRTITFEQF (115 aa)) is mediates interaction with LIMK1. The residue at position 15 (Thr-15) is a Phosphothreonine. Phosphoserine occurs at positions 19, 31, and 34. Position 42 is a phosphothreonine (Thr-42). Zn(2+) is bound by residues His-60, His-71, Cys-79, and Cys-82. Thr-91 is modified (phosphothreonine). Ser-106 bears the Phosphoserine mark. O-linked (GlcNAc) serine glycosylation is present at Ser-151. 2 positions are modified to phosphoserine: Ser-158 and Ser-159. The interval 166 to 192 (TDTSKFTGSHKERFDQSGKGKGKAGRV) is disordered. Basic and acidic residues predominate over residues 174–183 (SHKERFDQSG).

This sequence belongs to the TPPP family. As to quaternary structure, homodimer. Binds tubulin; binding is inhibited by GTP. Interacts with MAPK1. Interacts with GAPDH; the interaction is direct. Interacts with LIMK1 (via the PDZ domain); the interaction is direct. Interacts with LIMK2. Interacts with HDAC6; thereby inhibiting the tubulin deacetylase activity of HDAC6. Interacts with aggregated SNCA; may have a pro-aggregatory role in synucleinopathies. Interacts with DYNLL1. Interacts (via C-terminus) with S100A2, S100A6 and S100B; these interactions inhibit TPPP dimerization. Mg(2+) serves as cofactor. In terms of processing, phosphorylated by LIMK1 on serine residues; phosphorylation may alter the tubulin polymerization activity. Phosphorylation by LIMK2, but not LIMK1, regulates astral microtubule organization at early stage of mitosis. Phosphorylation by ROCK1 at Ser-31, Ser-106 and Ser-158 inhibits interaction with HDAC6, resulting in decreased acetylation of tubulin, increased cell motility and entry into S-phase. Phosphorylation by CDK1 inhibits the microtubule polymerizing activity. Degraded by the proteasome; zinc-binding inhibits degradation by the proteasome. In terms of tissue distribution, widely expressed with higher expression in brain (at protein level).

The protein resides in the golgi outpost. Its subcellular location is the cytoplasm. It is found in the cytoskeleton. The protein localises to the microtubule organizing center. It localises to the nucleus. The protein resides in the spindle. It catalyses the reaction GTP + H2O = GDP + phosphate + H(+). In terms of biological role, regulator of microtubule dynamics that plays a key role in myelination by promoting elongation of the myelin sheath. Acts as a microtubule nucleation factor in oligodendrocytes: specifically localizes to the postsynaptic Golgi apparatus region, also named Golgi outpost, and promotes microtubule nucleation, an important step for elongation of the myelin sheath. Required for both uniform polarized growth of distal microtubules as well as directing the branching of proximal processes. Shows magnesium-dependent GTPase activity; the role of the GTPase activity is unclear. In addition to microtubule nucleation activity, also involved in microtubule bundling and stabilization of existing microtubules, thereby maintaining the integrity of the microtubule network. Regulates microtubule dynamics by promoting tubulin acetylation: acts by inhibiting the tubulin deacetylase activity of HDAC6. Also regulates cell migration: phosphorylation by ROCK1 inhibits interaction with HDAC6, resulting in decreased acetylation of tubulin and increased cell motility. Plays a role in cell proliferation by regulating the G1/S-phase transition. Involved in astral microtubule organization and mitotic spindle orientation during early stage of mitosis; this process is regulated by phosphorylation by LIMK2. This Mus musculus (Mouse) protein is Tubulin polymerization-promoting protein.